The chain runs to 208 residues: Imidazole glycerol phosphate synthase subunit HisH (208 aa).

The Glutamine amidotransferase type-1 domain occupies 1–206 (MIVIIDYDTG…KEVTYSCKSS (206 aa)). The active-site Nucleophile is Cys-79. Residues His-181 and Glu-183 contribute to the active site.

As to quaternary structure, heterodimer of HisH and HisF.

It localises to the cytoplasm. The catalysed reaction is 5-[(5-phospho-1-deoxy-D-ribulos-1-ylimino)methylamino]-1-(5-phospho-beta-D-ribosyl)imidazole-4-carboxamide + L-glutamine = D-erythro-1-(imidazol-4-yl)glycerol 3-phosphate + 5-amino-1-(5-phospho-beta-D-ribosyl)imidazole-4-carboxamide + L-glutamate + H(+). It catalyses the reaction L-glutamine + H2O = L-glutamate + NH4(+). Its pathway is amino-acid biosynthesis; L-histidine biosynthesis; L-histidine from 5-phospho-alpha-D-ribose 1-diphosphate: step 5/9. IGPS catalyzes the conversion of PRFAR and glutamine to IGP, AICAR and glutamate. The HisH subunit catalyzes the hydrolysis of glutamine to glutamate and ammonia as part of the synthesis of IGP and AICAR. The resulting ammonia molecule is channeled to the active site of HisF. This chain is Imidazole glycerol phosphate synthase subunit HisH, found in Listeria monocytogenes serotype 4a (strain HCC23).